Here is a 170-residue protein sequence, read N- to C-terminus: Cilia- and flagella-associated protein 276 (170 aa).

2 disordered regions span residues 1–37 (MPLT…PTHL) and 151–170 (HTAA…FFST).

In terms of assembly, microtubule inner protein component of sperm flagellar doublet microtubules. As to expression, expressed in trachea multiciliated cells.

Its subcellular location is the cytoplasm. It localises to the cytoskeleton. The protein localises to the cilium axoneme. It is found in the flagellum axoneme. Its function is as follows. Microtubule inner protein (MIP) part of the dynein-decorated doublet microtubules (DMTs) in cilia axoneme, which is required for motile cilia beating. May play an important role for the maintenance of myelin-axon integrity. May affect intracellular Ca(2+) homeostasis. In Bos taurus (Bovine), this protein is Cilia- and flagella-associated protein 276.